The primary structure comprises 631 residues: tRNA uridine 5-carboxymethylaminomethyl modification enzyme MnmG (631 aa).

14 to 19 (GGGHAG) is an FAD binding site. Residue 274–288 (GPRYCPSIEDKIHRF) participates in NAD(+) binding.

This sequence belongs to the MnmG family. As to quaternary structure, homodimer. Heterotetramer of two MnmE and two MnmG subunits. It depends on FAD as a cofactor.

It is found in the cytoplasm. NAD-binding protein involved in the addition of a carboxymethylaminomethyl (cmnm) group at the wobble position (U34) of certain tRNAs, forming tRNA-cmnm(5)s(2)U34. This Pseudomonas paraeruginosa (strain DSM 24068 / PA7) (Pseudomonas aeruginosa (strain PA7)) protein is tRNA uridine 5-carboxymethylaminomethyl modification enzyme MnmG.